The primary structure comprises 356 residues: S-adenosylmethionine:tRNA ribosyltransferase-isomerase (356 aa).

Belongs to the QueA family. Monomer.

It is found in the cytoplasm. The enzyme catalyses 7-aminomethyl-7-carbaguanosine(34) in tRNA + S-adenosyl-L-methionine = epoxyqueuosine(34) in tRNA + adenine + L-methionine + 2 H(+). It functions in the pathway tRNA modification; tRNA-queuosine biosynthesis. Functionally, transfers and isomerizes the ribose moiety from AdoMet to the 7-aminomethyl group of 7-deazaguanine (preQ1-tRNA) to give epoxyqueuosine (oQ-tRNA). The protein is S-adenosylmethionine:tRNA ribosyltransferase-isomerase of Escherichia coli O127:H6 (strain E2348/69 / EPEC).